The sequence spans 387 residues: 3-ketoacyl-CoA thiolase (387 aa).

C91 (acyl-thioester intermediate) is an active-site residue. Active-site proton acceptor residues include H343 and C373.

It belongs to the thiolase-like superfamily. Thiolase family. Heterotetramer of two alpha chains (FadB) and two beta chains (FadA).

It is found in the cytoplasm. The enzyme catalyses an acyl-CoA + acetyl-CoA = a 3-oxoacyl-CoA + CoA. The protein operates within lipid metabolism; fatty acid beta-oxidation. Catalyzes the final step of fatty acid oxidation in which acetyl-CoA is released and the CoA ester of a fatty acid two carbons shorter is formed. The chain is 3-ketoacyl-CoA thiolase from Escherichia coli O9:H4 (strain HS).